The primary structure comprises 323 residues: MYHNSSQKRHWTFASEEQLARLRADANRKFKCKAVANGKVLPNDPLFLEPHEEMTLCKYYEKRLLEFCSVFKPAMPRSVVGTACMYFKRFYLNNSVMEYHPRIIMLTCAFLACKVDEFNVSSPQFVGNLRESPLGQEKALEQILEYELLLIQQLNFHLIVHNPYRPFEGFLIDIKTRYPMLENPEILRKTADDFLSRIALTDAYLLYTPSQIALTAILSSASRAGITMESYLSESLMLKENRTCLSQLLDIMKSMRNLVKKYEPPRSEEVAILKQKLERCHSSDLALNMVTKKRKGYEDDDYVSKKPKQEEEEWTDDDLVDAL.

Ser5 carries the phosphoserine; by CDK8 modification. Ser132 is modified (phosphoserine). Residues 296 to 323 are disordered; that stretch reads GYEDDDYVSKKPKQEEEEWTDDDLVDAL. Position 304 is a phosphoserine; by CDK8 (Ser304). Residues 310-323 show a composition bias toward acidic residues; the sequence is EEEEWTDDDLVDAL. Thr315 carries the post-translational modification Phosphothreonine.

The protein belongs to the cyclin family. Cyclin C subfamily. Associates primarily with CDK7 and MAT1 to form the CAK complex. CAK can further associate with the core-TFIIH to form the TFIIH basal transcription factor.

The protein resides in the nucleus. Its function is as follows. Regulates CDK7, the catalytic subunit of the CDK-activating kinase (CAK) enzymatic complex. CAK activates the cyclin-associated kinases CDK1, CDK2, CDK4 and CDK6 by threonine phosphorylation. CAK complexed to the core-TFIIH basal transcription factor activates RNA polymerase II by serine phosphorylation of the repetitive C-terminal domain (CTD) of its large subunit (POLR2A), allowing its escape from the promoter and elongation of the transcripts. Involved in cell cycle control and in RNA transcription by RNA polymerase II. Its expression and activity are constant throughout the cell cycle. The polypeptide is Cyclin-H (Ccnh) (Rattus norvegicus (Rat)).